The chain runs to 580 residues: TRAF-type zinc finger domain-containing protein 1 (580 aa).

An N-acetylalanine modification is found at Ala2. The TRAF-type zinc finger occupies 27 to 103 (IHEIHCQRNI…DLELSVVKLK (77 aa)). Residues Ser278, Ser320, Ser326, Ser327, Ser409, Ser415, Ser430, Ser450, Ser469, and Ser532 each carry the phosphoserine modification. 3 disordered regions span residues 395–453 (TANH…SPNR), 468–509 (PSGP…ASGH), and 524–580 (FAPS…EEEE). Polar residues predominate over residues 407–417 (QDSQPENTSAE).

Interacts with MAVS, TICAM1, TRAF1, TRAF2, TRAF3 and TRAF6. In terms of tissue distribution, expressed in skeletal muscle, brain, liver, kidney, spleen and bone marrow. Expression depends on STAT1.

Functionally, negative feedback regulator that controls excessive innate immune responses. Regulates both Toll-like receptor 4 (TLR4) and DDX58/RIG1-like helicases (RLH) pathways. May inhibit the LTR pathway by direct interaction with TRAF6 and attenuation of NF-kappa-B activation. May negatively regulate the RLH pathway downstream from MAVS and upstream of NF-kappa-B and IRF3. This is TRAF-type zinc finger domain-containing protein 1 (Trafd1) from Mus musculus (Mouse).